The following is a 303-amino-acid chain: Mitochondrial basic amino acids transporter (303 aa).

6 helical membrane passes run 2 to 22 (ALDF…GHPF), 61 to 81 (GLGS…GVQG), 96 to 116 (FLAG…MELA), 153 to 172 (GMVS…FLTY), 187 to 207 (LLVP…WLST), and 255 to 275 (LLRA…VLTY). Solcar repeat units lie at residues 2–86 (ALDF…TLRA), 90–178 (DSPL…LTRA), and 185–275 (DRLL…VLTY). Positions 282–303 (GPEGEAVPAAPAGPALAQPSSL) are disordered. Over residues 284 to 303 (EGEAVPAAPAGPALAQPSSL) the composition is skewed to low complexity.

This sequence belongs to the mitochondrial carrier (TC 2.A.29) family.

It localises to the mitochondrion inner membrane. The catalysed reaction is L-lysine(out) + L-arginine(in) = L-lysine(in) + L-arginine(out). It carries out the reaction L-histidine(out) + L-arginine(in) = L-histidine(in) + L-arginine(out). The enzyme catalyses L-ornithine(in) + L-arginine(out) = L-ornithine(out) + L-arginine(in). It catalyses the reaction L-homoarginine(in) + L-arginine(out) = L-homoarginine(out) + L-arginine(in). The catalysed reaction is N(omega)-methyl-L-arginine(in) + L-arginine(out) = N(omega)-methyl-L-arginine(out) + L-arginine(in). It carries out the reaction L-arginine(in) = L-arginine(out). The enzyme catalyses L-lysine(in) = L-lysine(out). It catalyses the reaction L-ornithine(in) = L-ornithine(out). The catalysed reaction is L-histidine(out) = L-histidine(in). Mitochondrial transporter of arginine, lysine, homoarginine, methylarginine and, to a much lesser extent, ornithine and histidine. Does not transport carnitine nor acylcarnitines. Functions by both counter-exchange and uniport mechanisms. Plays a physiological role in the import of basic amino acids into mitochondria for mitochondrial protein synthesis and amino acid degradation. The chain is Mitochondrial basic amino acids transporter from Homo sapiens (Human).